A 123-amino-acid chain; its full sequence is Large ribosomal subunit protein uL24 (123 aa).

Belongs to the universal ribosomal protein uL24 family. As to quaternary structure, part of the 50S ribosomal subunit.

Functionally, one of two assembly initiator proteins, it binds directly to the 5'-end of the 23S rRNA, where it nucleates assembly of the 50S subunit. In terms of biological role, located at the polypeptide exit tunnel on the outside of the subunit. This Pyrobaculum aerophilum (strain ATCC 51768 / DSM 7523 / JCM 9630 / CIP 104966 / NBRC 100827 / IM2) protein is Large ribosomal subunit protein uL24.